The sequence spans 2599 residues: Protein DOP1 homolog (2599 aa).

2 disordered regions span residues E532 to R571 and A595 to E701. 3 stretches are compositionally biased toward polar residues: residues S534–S549, A595–S604, and A625–L636. Position 753 is a phosphoserine (S753). Positions P1240–L1251 are enriched in basic and acidic residues. Disordered regions lie at residues P1240–A1316 and T1347–D1368. Positions Q1264–Q1282 are enriched in polar residues. The span at S1297–S1309 shows a compositional bias: basic and acidic residues. At T1355 the chain carries Phosphothreonine. Residues S1360, S1363, and S1371 each carry the phosphoserine modification. A disordered region spans residues C1409–N1442. The span at I1410–H1423 shows a compositional bias: polar residues. At S2525 the chain carries Phosphoserine.

This sequence belongs to the DOP1 family.

It localises to the golgi apparatus membrane. May be involved in protein traffic between late Golgi and early endosomes. The chain is Protein DOP1 homolog from Drosophila melanogaster (Fruit fly).